We begin with the raw amino-acid sequence, 206 residues long: Ras-related protein Rab7 (206 aa).

GTP is bound by residues 15–22 (GDTGVGKT), 63–67 (DTAGQ), and 125–128 (NKID). S-geranylgeranyl cysteine attachment occurs at residues Cys204 and Cys206. A Cysteine methyl ester modification is found at Cys206.

This sequence belongs to the small GTPase superfamily. Rab family.

The protein localises to the cell membrane. Functionally, protein transport. Probably involved in vesicular traffic. The chain is Ras-related protein Rab7 from Vigna aconitifolia (Moth bean).